The primary structure comprises 82 residues: Hepcidin (82 aa).

A signal peptide spans 1 to 23 (MALSVQIRAACLLLLLLVSLTAG). The propeptide occupies 24-53 (SVLPSQTRQLTDLRTQDTAGATAGLTPVAQ). Cystine bridges form between cysteine 64–cysteine 80, cysteine 67–cysteine 70, cysteine 68–cysteine 76, and cysteine 71–cysteine 79.

It belongs to the hepcidin family. Interacts with SLC40A1; this interaction promotes SLC40A1 rapid ubiquitination.

The protein localises to the secreted. Its function is as follows. Liver-produced hormone that constitutes the main circulating regulator of iron absorption and distribution across tissues. Acts by promoting endocytosis and degradation of ferroportin/SLC40A1, leading to the retention of iron in iron-exporting cells and decreased flow of iron into plasma. Controls the major flows of iron into plasma: absorption of dietary iron in the intestine, recycling of iron by macrophages, which phagocytose old erythrocytes and other cells, and mobilization of stored iron from hepatocytes. In terms of biological role, has strong antimicrobial activity against E.coli ML35P N.cinerea and weaker against S.epidermidis, S.aureus and group b streptococcus bacteria. Active against the fungus C.albicans. No activity against P.aeruginosa. This chain is Hepcidin (HAMP), found in Sus scrofa (Pig).